The chain runs to 101 residues: MVYAIVRAGGRQEKVSVGDLVTLDRVPAETGGSVELPALMLVDGDEVKAGADAAGVKVTAEVVSHSRGKKVVIMKYKNKTGYKKRQGHRSELSTVKITGIA.

Belongs to the bacterial ribosomal protein bL21 family. In terms of assembly, part of the 50S ribosomal subunit. Contacts protein L20.

Its function is as follows. This protein binds to 23S rRNA in the presence of protein L20. In Micrococcus luteus (strain ATCC 4698 / DSM 20030 / JCM 1464 / CCM 169 / CCUG 5858 / IAM 1056 / NBRC 3333 / NCIMB 9278 / NCTC 2665 / VKM Ac-2230) (Micrococcus lysodeikticus), this protein is Large ribosomal subunit protein bL21.